The sequence spans 122 residues: Large ribosomal subunit protein uL14 (122 aa).

This sequence belongs to the universal ribosomal protein uL14 family. Part of the 50S ribosomal subunit. Forms a cluster with proteins L3 and L19. In the 70S ribosome, L14 and L19 interact and together make contacts with the 16S rRNA in bridges B5 and B8.

Binds to 23S rRNA. Forms part of two intersubunit bridges in the 70S ribosome. The protein is Large ribosomal subunit protein uL14 of Chlorobium luteolum (strain DSM 273 / BCRC 81028 / 2530) (Pelodictyon luteolum).